A 283-amino-acid chain; its full sequence is Phosphatidylglycerol--prolipoprotein diacylglyceryl transferase (283 aa).

Helical transmembrane passes span Leu-21 to Ala-41, Leu-60 to Tyr-80, Val-95 to Trp-115, Phe-124 to Leu-144, Ser-176 to Ile-196, Gly-203 to Val-223, and Met-239 to Phe-259. Arg-143 contributes to the a 1,2-diacyl-sn-glycero-3-phospho-(1'-sn-glycerol) binding site.

Belongs to the Lgt family.

The protein localises to the cell inner membrane. The enzyme catalyses L-cysteinyl-[prolipoprotein] + a 1,2-diacyl-sn-glycero-3-phospho-(1'-sn-glycerol) = an S-1,2-diacyl-sn-glyceryl-L-cysteinyl-[prolipoprotein] + sn-glycerol 1-phosphate + H(+). It participates in protein modification; lipoprotein biosynthesis (diacylglyceryl transfer). Functionally, catalyzes the transfer of the diacylglyceryl group from phosphatidylglycerol to the sulfhydryl group of the N-terminal cysteine of a prolipoprotein, the first step in the formation of mature lipoproteins. The polypeptide is Phosphatidylglycerol--prolipoprotein diacylglyceryl transferase (Aliivibrio salmonicida (strain LFI1238) (Vibrio salmonicida (strain LFI1238))).